The primary structure comprises 341 residues: Geranylgeranyl transferase type-2 subunit beta (341 aa).

PFTB repeat units follow at residues 15–55, 62–104, 122–163, 170–211, 223–264, and 271–313; these read KSKH…ITMN, QQDV…KIYD, RERL…SLLN, ADTA…AIMN, VKLI…SILK, and LKIL…SLID. Geranylgeranyl diphosphate contacts are provided by residues 196 to 198 and 243 to 255; these read HAA and RPEK…YSWW. Aspartate 249, cysteine 251, and histidine 301 together coordinate Zn(2+).

This sequence belongs to the protein prenyltransferase subunit beta family. In terms of assembly, heterodimer of an alpha and a beta subunit. Requires Zn(2+) as cofactor.

The catalysed reaction is geranylgeranyl diphosphate + L-cysteinyl-[protein] = S-geranylgeranyl-L-cysteinyl-[protein] + diphosphate. In terms of biological role, catalyzes the transfer of a geranyl-geranyl moiety from geranyl-geranyl pyrophosphate to proteins having the C-terminal -XCC or -XCXC, where both cysteines may become modified. Acts on YPT1 and SEC4. This chain is Geranylgeranyl transferase type-2 subunit beta (BET2), found in Candida albicans (Yeast).